Consider the following 691-residue polypeptide: Proprotein convertase subtilisin/kexin type 9 (691 aa).

The N-terminal stretch at Met1–Ala29 is a signal peptide. Residues Gln30–Gln151 constitute a propeptide that is removed on maturation. Tyr37 carries the post-translational modification Sulfotyrosine. Ser46 bears the Phosphoserine mark. Positions Thr76–Val148 constitute an Inhibitor I9 domain. One can recognise a Peptidase S8 domain in the interval Pro154–Trp460. Active-site charge relay system residues include Asp185 and His225. Disulfide bonds link Cys222–Cys254 and Cys322–Cys357. Residue Ser385 is the Charge relay system of the active site. The segment at Gly449–Gln691 is C-terminal domain. 3 disulfide bridges follow: Cys456-Cys526, Cys476-Cys525, and Cys485-Cys508. A glycan (N-linked (GlcNAc...) asparagine) is linked at Asn532. 6 cysteine pairs are disulfide-bonded: Cys533–Cys600, Cys551–Cys599, Cys561–Cys587, Cys607–Cys678, Cys625–Cys677, and Cys634–Cys653. Ser687 bears the Phosphoserine mark.

The protein belongs to the peptidase S8 family. In terms of assembly, monomer. Can self-associate to form dimers and higher multimers which may have increased LDLR degrading activity. The precursor protein but not the mature protein may form multimers. Interacts with APOB, VLDLR, LRP8/APOER2 and BACE1. The full-length immature form (pro-PCSK9) interacts with SCNN1A, SCNN1B and SCNN1G. The pro-PCSK9 form (via C-terminal domain) interacts with LDLR. Interacts (via the C-terminal domain) with ANXA2 (via repeat Annexin 1); the interaction inhibits the degradation of LDLR. Ca(2+) serves as cofactor. In terms of processing, cleavage by furin and PCSK5 generates a truncated inactive protein that is unable to induce LDLR degradation. Post-translationally, undergoes autocatalytic cleavage in the endoplasmic reticulum to release the propeptide from the N-terminus and the cleavage of the propeptide is strictly required for its maturation and activation. The cleaved propeptide however remains associated with the catalytic domain through non-covalent interactions, preventing potential substrates from accessing its active site. As a result, it is secreted from cells as a propeptide-containing, enzymatically inactive protein. Phosphorylation protects the propeptide against proteolysis.

It localises to the cytoplasm. Its subcellular location is the secreted. The protein localises to the endosome. The protein resides in the lysosome. It is found in the cell surface. It localises to the endoplasmic reticulum. Its subcellular location is the golgi apparatus. Its activity is regulated as follows. Its proteolytic activity is autoinhibited by the non-covalent binding of the propeptide to the catalytic domain. Inhibited by EGTA. In terms of biological role, crucial player in the regulation of plasma cholesterol homeostasis. Binds to low-density lipid receptor family members: low density lipoprotein receptor (LDLR), very low density lipoprotein receptor (VLDLR), apolipoprotein E receptor (LRP1/APOER) and apolipoprotein receptor 2 (LRP8/APOER2), and promotes their degradation in intracellular acidic compartments. Acts via a non-proteolytic mechanism to enhance the degradation of the hepatic LDLR through a clathrin LDLRAP1/ARH-mediated pathway. May prevent the recycling of LDLR from endosomes to the cell surface or direct it to lysosomes for degradation. Can induce ubiquitination of LDLR leading to its subsequent degradation. Inhibits intracellular degradation of APOB via the autophagosome/lysosome pathway in a LDLR-independent manner. Involved in the disposal of non-acetylated intermediates of BACE1 in the early secretory pathway. Inhibits epithelial Na(+) channel (ENaC)-mediated Na(+) absorption by reducing ENaC surface expression primarily by increasing its proteasomal degradation. Regulates neuronal apoptosis via modulation of LRP8/APOER2 levels and related anti-apoptotic signaling pathways. The protein is Proprotein convertase subtilisin/kexin type 9 (PCSK9) of Saimiri boliviensis boliviensis (Bolivian squirrel monkey).